Reading from the N-terminus, the 281-residue chain is 3-hydroxyanthranilate 3,4-dioxygenase (281 aa).

Residues 1–162 form a domain A (catalytic) region; it reads MSGVTAIEIP…SNEFKTGKPG (162 aa). Arginine 45 serves as a coordination point for O2. The Fe cation site is built by histidine 49, glutamate 55, and histidine 93. Residue glutamate 55 coordinates substrate. Arginine 97 and glutamate 107 together coordinate substrate. Residues 163–179 are linker; sequence KGTFACNAPYEARWTDL. Residues 180-281 are domain B; that stretch reads PVPINRKEFI…GFAITIRMPA (102 aa).

The protein belongs to the 3-HAO family. Requires Fe(2+) as cofactor.

The protein resides in the cytoplasm. The enzyme catalyses 3-hydroxyanthranilate + O2 = (2Z,4Z)-2-amino-3-carboxymuconate 6-semialdehyde. It participates in cofactor biosynthesis; NAD(+) biosynthesis; quinolinate from L-kynurenine: step 3/3. Catalyzes the oxidative ring opening of 3-hydroxyanthranilate to 2-amino-3-carboxymuconate semialdehyde, which spontaneously cyclizes to quinolinate. The polypeptide is 3-hydroxyanthranilate 3,4-dioxygenase (haao-1) (Caenorhabditis elegans).